The chain runs to 252 residues: Probable transcriptional regulatory protein RT0442 (252 aa).

The segment at 1–22 (MSGHSKFKNIQHRKGAQDKKKS) is disordered.

It belongs to the TACO1 family.

It is found in the cytoplasm. The chain is Probable transcriptional regulatory protein RT0442 from Rickettsia typhi (strain ATCC VR-144 / Wilmington).